The sequence spans 405 residues: uncharacterized protein (405 aa).

The next 12 membrane-spanning stretches (helical) occupy residues 3–23, 42–62, 73–93, 95–115, 135–155, 162–182, 209–229, 248–268, 280–300, 309–329, 346–366, and 377–397; these read IIAKIPAWMLLCLFILSPTTE, GITQTTSTLYFLGFALGILTL, PIALLGLFIYVISSIISIFAV, IEMLMIARFVQAFGVSVGSVI, SLSPWLLFIPSLGSSIGGYII, YVFVFFSLTGTILLALYYKVL, ILWLYAFIIGAFNGIYYGFFI, KLAFLLSFAAIFGGFLGGYLI, GLGFIFSLCGCILFAVNAFIL, LAIAMIFVPMMIHMVGHNLLI, TAGSIFGAIYYVVIAAVTYLV, and FALLCFVLSISSAISFYCIWV.

The protein belongs to the major facilitator superfamily. Bcr/CmlA family.

Its subcellular location is the cell inner membrane. This is an uncharacterized protein from Rickettsia felis (strain ATCC VR-1525 / URRWXCal2) (Rickettsia azadi).